Reading from the N-terminus, the 365-residue chain is Aspartate-semialdehyde dehydrogenase (365 aa).

Residues T12, G13, S14, V15, S37, S40, L85, and D86 each contribute to the NADP(+) site. The Acyl-thioester intermediate role is filled by C156. Residue G188 coordinates NADP(+). H256 functions as the Proton acceptor in the catalytic mechanism. N343 lines the NADP(+) pocket.

It belongs to the aspartate-semialdehyde dehydrogenase family. As to quaternary structure, homotetramer; dimer of dimers.

The protein resides in the cytoplasm. The protein localises to the cytosol. It is found in the nucleus. The enzyme catalyses L-aspartate 4-semialdehyde + phosphate + NADP(+) = 4-phospho-L-aspartate + NADPH + H(+). The protein operates within amino-acid biosynthesis; L-methionine biosynthesis via de novo pathway; L-homoserine from L-aspartate: step 2/3. Its pathway is amino-acid biosynthesis; L-threonine biosynthesis; L-threonine from L-aspartate: step 2/5. Its activity is regulated as follows. Inhibited by the non-competitive inhibitors phthalaldehyde and naphthalene, the competitive inhibitor 1,4-benzoquinone and derivates such as 2-chloro-3-methoxy-1,4-naphthoquinone, 2,3-dichloro-1,4-naphthoquinone, 2-chloro-1,4-naphthoquinone, 2-bromo-1,4-naphthoquinone and 2,3-dichloro-5,8-dihydroxy-1,4-naphthoquinone, and 5-aminoisoquinoline. Inhibited by vinyl sulfones. Catalyzes the NADPH-dependent formation of L-aspartate 4-semialdehyde (L-ASA) by the reductive dephosphorylation of 4-phospho-L-aspartate. Mediates the second step in the biosynthesis of amino acids that derive from aspartate (the aspartate family of amino acids), including methioinine and threonine, the latter of which is a precursor to isoleucine. This Candida albicans (strain SC5314 / ATCC MYA-2876) (Yeast) protein is Aspartate-semialdehyde dehydrogenase.